The chain runs to 371 residues: Carnitine monooxygenase oxygenase subunit (371 aa).

The Rieske domain maps to 44–152 (WICVAHSSEL…VEEYAGFLFI (109 aa)). Residues C86, H88, C106, and H109 each contribute to the [2Fe-2S] cluster site. Fe cation contacts are provided by H208, H213, and D323.

This sequence belongs to the bacterial ring-hydroxylating dioxygenase alpha subunit family. CntA subfamily. As to quaternary structure, composed of an oxygenase subunit (cntA) and a reductase subunit (cntB). Requires [2Fe-2S] cluster as cofactor. It depends on Fe cation as a cofactor.

It catalyses the reaction (R)-carnitine + NADH + O2 + H(+) = (3R)-3-hydroxy-4-oxobutanoate + trimethylamine + NAD(+) + H2O. The catalysed reaction is (R)-carnitine + NADPH + O2 + H(+) = (3R)-3-hydroxy-4-oxobutanoate + trimethylamine + NADP(+) + H2O. It participates in amine and polyamine metabolism; carnitine metabolism. Its function is as follows. Converts carnitine to trimethylamine and malic semialdehyde. In Acinetobacter baumannii (strain ATCC 19606 / DSM 30007 / JCM 6841 / CCUG 19606 / CIP 70.34 / NBRC 109757 / NCIMB 12457 / NCTC 12156 / 81), this protein is Carnitine monooxygenase oxygenase subunit.